Consider the following 490-residue polypeptide: Betaine aldehyde dehydrogenase (490 aa).

Positions 26 and 93 each coordinate K(+). 150 to 152 serves as a coordination point for NAD(+); the sequence is GAW. K162 (charge relay system) is an active-site residue. Residue 176–179 participates in NAD(+) binding; the sequence is KPSE. V180 contacts K(+). Position 230–233 (230–233) interacts with NAD(+); that stretch reads GVAT. L246 contacts K(+). E252 serves as the catalytic Proton acceptor. NAD(+) contacts are provided by G254, C286, and E387. C286 acts as the Nucleophile in catalysis. Cysteine sulfenic acid (-SOH) is present on C286. K(+)-binding residues include K457 and G460. E464 acts as the Charge relay system in catalysis.

This sequence belongs to the aldehyde dehydrogenase family. As to quaternary structure, dimer of dimers. The cofactor is K(+).

The catalysed reaction is betaine aldehyde + NAD(+) + H2O = glycine betaine + NADH + 2 H(+). The protein operates within amine and polyamine biosynthesis; betaine biosynthesis via choline pathway; betaine from betaine aldehyde: step 1/1. Involved in the biosynthesis of the osmoprotectant glycine betaine. Catalyzes the irreversible oxidation of betaine aldehyde to the corresponding acid. This chain is Betaine aldehyde dehydrogenase, found in Stenotrophomonas maltophilia (strain R551-3).